A 119-amino-acid chain; its full sequence is Ribonuclease P protein component (119 aa).

This sequence belongs to the RnpA family. Consists of a catalytic RNA component (M1 or rnpB) and a protein subunit.

The enzyme catalyses Endonucleolytic cleavage of RNA, removing 5'-extranucleotides from tRNA precursor.. RNaseP catalyzes the removal of the 5'-leader sequence from pre-tRNA to produce the mature 5'-terminus. It can also cleave other RNA substrates such as 4.5S RNA. The protein component plays an auxiliary but essential role in vivo by binding to the 5'-leader sequence and broadening the substrate specificity of the ribozyme. This chain is Ribonuclease P protein component, found in Bacillus pumilus (strain SAFR-032).